Consider the following 348-residue polypeptide: MKETKITYKDAGVDIDAGNTFVQMIKPLVKATSRPEVLADIGGFGGLFSLNMGKYKHPVLVSGTDGVGTKLKLAFLADRHDTIGIDLVAMCVNDIIVQGAEPLFFLDYLATAKLDPVKAASIIKGVSEGCVQAGCALIGGETAEMPGFYTGDEYDMAGFAVGVVEREKIIDGSSITVGNRLIGLASSGLHSNGYSLARKVILEHMGLGIDDELPGLGKTVAEELLTPTRIYVRSVMNLLRDFNISGLAHITGGGLLENIPRVLPNGCKAVIKKESWEVPEIFRIMQKAGNIEENEMFRTFNCGIGMVLVVPEKEAEEIMIRLSGLNETAFVIGEVAKCDAGKECVELV.

Belongs to the AIR synthase family.

The protein resides in the cytoplasm. The catalysed reaction is 2-formamido-N(1)-(5-O-phospho-beta-D-ribosyl)acetamidine + ATP = 5-amino-1-(5-phospho-beta-D-ribosyl)imidazole + ADP + phosphate + H(+). Its pathway is purine metabolism; IMP biosynthesis via de novo pathway; 5-amino-1-(5-phospho-D-ribosyl)imidazole from N(2)-formyl-N(1)-(5-phospho-D-ribosyl)glycinamide: step 2/2. The polypeptide is Phosphoribosylformylglycinamidine cyclo-ligase (Geobacter sp. (strain M21)).